We begin with the raw amino-acid sequence, 379 residues long: PqqA peptide cyclase (379 aa).

One can recognise a Radical SAM core domain in the interval 8-220; sequence LPAPIGLLAE…IRVVEEARER (213 aa). 3 residues coordinate [4Fe-4S] cluster: C22, C26, and C29.

This sequence belongs to the radical SAM superfamily. PqqE family. In terms of assembly, interacts with PqqD. The interaction is necessary for activity of PqqE. [4Fe-4S] cluster serves as cofactor.

It carries out the reaction [PQQ precursor protein] + S-adenosyl-L-methionine = E-Y cross-linked-[PQQ precursor protein] + 5'-deoxyadenosine + L-methionine + H(+). It participates in cofactor biosynthesis; pyrroloquinoline quinone biosynthesis. Functionally, catalyzes the cross-linking of a glutamate residue and a tyrosine residue in the PqqA protein as part of the biosynthesis of pyrroloquinoline quinone (PQQ). This is PqqA peptide cyclase from Methylobacterium sp. (strain 4-46).